The sequence spans 2193 residues: Highly reducing polyketide synthase VdtX (2193 aa).

In terms of domain architecture, Ketosynthase family 3 (KS3) spans 1–417 (MAICGIAVRL…GVNAHVIIES (417 aa)). Catalysis depends on for beta-ketoacyl synthase activity residues Cys170, His306, and His340. The tract at residues 513 to 809 (VFAGQGAQWP…HPYVPCLIRF (297 aa)) is malonyl-CoA:ACP transacylase (MAT) domain. An N-terminal hotdog fold region spans residues 877–1001 (HELLGTRVVD…GEVAQENLSR (125 aa)). Residues 877-1128 (HELLGTRVVD…DIVLRPLGAN (252 aa)) form a dehydratase (DH) domain region. In terms of domain architecture, PKS/mFAS DH spans 877 to 1202 (HELLGTRVVD…LQRQPKPSSE (326 aa)). Catalysis depends on His909, which acts as the Proton acceptor; for dehydratase activity. Residues 1032-1202 (SVTSNTVSGR…LQRQPKPSSE (171 aa)) are C-terminal hotdog fold. The active-site Proton donor; for dehydratase activity is the Asp1093. The interval 1256–1390 (NYLNEPQQRI…DRWDSILKAA (135 aa)) is methyltransferase (CMet) domain. An enoyl reductase (ER) domain region spans residues 1575–1783 (GQQVQLLGDD…SGQHIGQLRL (209 aa)). The segment at 1807-1981 (ASYLLVGGLG…ASVIDIGEVQ (175 aa)) is ketoreductase (KR) domain. The 82-residue stretch at 2102-2183 (PSATQFVSLE…AMGEHVIREL (82 aa)) folds into the Carrier domain. An O-(pantetheine 4'-phosphoryl)serine modification is found at Ser2143.

Functionally, highly reducing polyketide synthase; part of the gene cluster that mediates the biosynthesis of viriditoxin, one of the 'classical' secondary metabolites produced by fungi and that has antibacterial activity. The first step is performed by the polyketide synthase VdtA which condenses one acetyl-CoA and 6 malonyl-CoA units to form the heptaketide monomer backbone of viriditoxin. The product of VdtA is then O-methylated on C7 by the O-methyltransferase VdtC. The O-methyl group is important for the stereoselective coupling of the monomers at the final step of viriditoxin biosynthesis. The short-chain dehydrogenase/reductase VdtF is involved in the reduction of the C3-C4 double bond. The FAD-binding monooxygenase VdtE then converts the ketone group into a methyl-ester group to yield semi-viriditoxin. Finally, the laccase VdtB is involved in dimerization of 2 semi-viriditoxin molecules to yield the final viriditoxin. The non-catalytic carboxylesterase-like protein VdtD affects the stereochemistical outcome of the coupling. The highly reducing polyketide synthase VdtX is not involved in viriditoxin synthesis, but might possibly play a role in the production of additional metabolites not identified yet. This chain is Highly reducing polyketide synthase VdtX, found in Byssochlamys spectabilis (Paecilomyces variotii).